The following is a 193-amino-acid chain: Imidazoleglycerol-phosphate dehydratase (193 aa).

It belongs to the imidazoleglycerol-phosphate dehydratase family.

Its subcellular location is the cytoplasm. It catalyses the reaction D-erythro-1-(imidazol-4-yl)glycerol 3-phosphate = 3-(imidazol-4-yl)-2-oxopropyl phosphate + H2O. Its pathway is amino-acid biosynthesis; L-histidine biosynthesis; L-histidine from 5-phospho-alpha-D-ribose 1-diphosphate: step 6/9. This Sulfolobus acidocaldarius (strain ATCC 33909 / DSM 639 / JCM 8929 / NBRC 15157 / NCIMB 11770) protein is Imidazoleglycerol-phosphate dehydratase.